The primary structure comprises 412 residues: Alpha-1-antiproteinase (412 aa).

Residues 1 to 24 (MPSSISWGLLLLAGLCCLAPGSLA) form the signal peptide. Residue serine 33 is modified to Phosphoserine. N-linked (GlcNAc...) asparagine glycans are attached at residues asparagine 65, asparagine 102, asparagine 165, and asparagine 266. The segment at 368 to 387 (GVTVLEAIPMSLPPDVRFDR) is RCL. Phosphoserine is present on serine 378.

It belongs to the serpin family. In terms of assembly, interacts with CELA2A. Interacts with ERGIC3 and LMAN1/ERGIC53. Interacts with PRSS1/Trypsin. Plasma.

Its subcellular location is the secreted. Inhibitor of serine proteases. This chain is Alpha-1-antiproteinase, found in Callosciurus caniceps (Gray-bellied squirrel).